We begin with the raw amino-acid sequence, 199 residues long: Recombination protein RecR (199 aa).

A C4-type zinc finger spans residues 58–73; sequence CKTCGNIDTQSPCTVC. Positions 81 to 176 constitute a Toprim domain; sequence AMIVVVADVA…KVTRLAHGVP (96 aa).

It belongs to the RecR family.

Its function is as follows. May play a role in DNA repair. It seems to be involved in an RecBC-independent recombinational process of DNA repair. It may act with RecF and RecO. In Bradyrhizobium sp. (strain BTAi1 / ATCC BAA-1182), this protein is Recombination protein RecR.